The chain runs to 627 residues: Muscarinic acetylcholine receptor gar-2 (627 aa).

Topologically, residues 1 to 9 (MAVASVLLA) are extracellular. Residues 10 to 30 (LFMLFLSIVTVIGNLAVLLSY) form a helical membrane-spanning segment. Topologically, residues 31–41 (YLDKNIRQPTN) are cytoplasmic. The chain crosses the membrane as a helical span at residues 42–62 (YFIFSLAISDLLIGLEGIPVY). Topologically, residues 63-81 (TAFYLNNNEWIWGDVLCDL) are extracellular. The cysteines at positions 79 and 160 are disulfide-linked. The chain crosses the membrane as a helical span at residues 82–102 (WLSIDYIVCLASIYTVLGITV). The Cytoplasmic portion of the chain corresponds to 103 to 122 (DRYYSVKKPATYRNWRTPGR). Residues 123 to 143 (VVLIIIFIWLVPSILFSVSIF) traverse the membrane as a helical segment. Residues 144-172 (GYGTFTGTGRILKETECYVQFMTNPYLNM) lie on the Extracellular side of the membrane. Residues 173–193 (GMYISYYWTTLFVMLYLYWGI) traverse the membrane as a helical segment. Over 194 to 549 (YRAAKKLALK…ENRARKALRT (356 aa)) the chain is Cytoplasmic. Disordered regions lie at residues 222-266 (VSVR…VGTP), 423-442 (REDE…ENGG), and 449-475 (ANDE…HDPN). The span at 231 to 264 (NSSSDSPNDTSNSSKCFRTAPPTTTVQTTQTNVG) shows a compositional bias: low complexity. Residues 459-475 (KESEQKEEMTPENHDPN) are compositionally biased toward basic and acidic residues. Residues 550–570 (ITFILGSFIILWTPFYVLATI) form a helical membrane-spanning segment. Topologically, residues 571–586 (YGFCETCKASPSFNTL) are extracellular. The helical transmembrane segment at 587–609 (YTISYYLCYMNSPLNPFCYAMAN) threads the bilayer. At 610-627 (QQFKKTLTRIFKGDFRRV) the chain is on the cytoplasmic side.

It belongs to the G-protein coupled receptor 1 family. Muscarinic acetylcholine receptor subfamily. Expressed in putative sensory neurons, many cells of the ventral cord and in the HSN motor neurons. Expressed in some cholinergic motor neurons and GABAergic motor neurons, which are the two major types of ventral cord motor neurons.

The protein localises to the cell membrane. The protein resides in the cell projection. Its subcellular location is the axon. Its function is as follows. The muscarinic acetylcholine receptor mediates various cellular responses, including inhibition of adenylate cyclase, breakdown of phosphoinositides and modulation of potassium channels through the action of G proteins. Primary transducing effect is Pi turnover. Regulates the activity of ventral cord motor neurons. Couples to the G(o)-alpha G-protein subunit goa-1 to negatively regulate cholinergic receptor activity in the presence of high levels of the neurotransmitter acetylcholine in ventral cord motor neurons. As acetylcholine depolarizes body wall muscles, modulation of acetylcholine levels most likely results in the control locomotory behavior and egg-laying. The chain is Muscarinic acetylcholine receptor gar-2 from Caenorhabditis elegans.